Consider the following 67-residue polypeptide: DNA-directed RNA polymerase subunit omega (67 aa).

The protein belongs to the RNA polymerase subunit omega family. As to quaternary structure, the RNAP catalytic core consists of 2 alpha, 1 beta, 1 beta' and 1 omega subunit. When a sigma factor is associated with the core the holoenzyme is formed, which can initiate transcription.

It catalyses the reaction RNA(n) + a ribonucleoside 5'-triphosphate = RNA(n+1) + diphosphate. In terms of biological role, promotes RNA polymerase assembly. Latches the N- and C-terminal regions of the beta' subunit thereby facilitating its interaction with the beta and alpha subunits. The protein is DNA-directed RNA polymerase subunit omega of Paraburkholderia phymatum (strain DSM 17167 / CIP 108236 / LMG 21445 / STM815) (Burkholderia phymatum).